We begin with the raw amino-acid sequence, 91 residues long: Small ribosomal subunit protein bS16 (91 aa).

Belongs to the bacterial ribosomal protein bS16 family.

The sequence is that of Small ribosomal subunit protein bS16 from Phytoplasma australiense.